Reading from the N-terminus, the 322-residue chain is Phosphatidylglycerol--prolipoprotein diacylglyceryl transferase (322 aa).

A run of 4 helical transmembrane segments spans residues 21–41 (PLPI…AIWL), 50–70 (GGNP…GIIG), 98–118 (NGGL…WAYF), and 123–143 (IPLA…QAIG). Arg-144 provides a ligand contact to a 1,2-diacyl-sn-glycero-3-phospho-(1'-sn-glycerol). The next 2 membrane-spanning stretches (helical) occupy residues 191–211 (VHPT…LLIW) and 254–274 (INTL…LRLG). Positions 283–322 (VDPAYHAAQAERDDTETAGLDATTGTVPGDSPETTGKKRK) are disordered.

This sequence belongs to the Lgt family.

The protein localises to the cell membrane. It catalyses the reaction L-cysteinyl-[prolipoprotein] + a 1,2-diacyl-sn-glycero-3-phospho-(1'-sn-glycerol) = an S-1,2-diacyl-sn-glyceryl-L-cysteinyl-[prolipoprotein] + sn-glycerol 1-phosphate + H(+). It participates in protein modification; lipoprotein biosynthesis (diacylglyceryl transfer). Its function is as follows. Catalyzes the transfer of the diacylglyceryl group from phosphatidylglycerol to the sulfhydryl group of the N-terminal cysteine of a prolipoprotein, the first step in the formation of mature lipoproteins. The polypeptide is Phosphatidylglycerol--prolipoprotein diacylglyceryl transferase (Corynebacterium efficiens (strain DSM 44549 / YS-314 / AJ 12310 / JCM 11189 / NBRC 100395)).